The chain runs to 446 residues: Tryptophan synthase beta chain 2 (446 aa).

Lys110 carries the post-translational modification N6-(pyridoxal phosphate)lysine.

Belongs to the TrpB family. Tetramer of two alpha and two beta chains. It depends on pyridoxal 5'-phosphate as a cofactor.

It carries out the reaction (1S,2R)-1-C-(indol-3-yl)glycerol 3-phosphate + L-serine = D-glyceraldehyde 3-phosphate + L-tryptophan + H2O. Its pathway is amino-acid biosynthesis; L-tryptophan biosynthesis; L-tryptophan from chorismate: step 5/5. In terms of biological role, the beta subunit is responsible for the synthesis of L-tryptophan from indole and L-serine. The protein is Tryptophan synthase beta chain 2 (trpB2) of Pyrococcus furiosus (strain ATCC 43587 / DSM 3638 / JCM 8422 / Vc1).